The following is a 552-amino-acid chain: MAGUK p55 subfamily member 2 (552 aa).

L27 domains lie at 8 to 59 and 60 to 118; these read SESA…EETK and LEAV…YETP. Ser42 is modified (phosphoserine). Phosphothreonine is present on Thr117. Residue Ser121 is modified to Phosphoserine. The region spanning 140 to 219 is the PDZ domain; sequence MVGIRKTAGE…SVILKILPSY (80 aa). Residues 225 to 293 form the SH3 domain; sequence PRQVFVKCHF…PSQLLEEKRK (69 aa). Residues 350–537 enclose the Guanylate kinase-like domain; that stretch reads RKTLVLIGAQ…TFRELQTAME (188 aa).

Belongs to the MAGUK family. Can homomultimerise. Interacts with CACNG2. Interacts (via the SH3-Guanylate kinase-like sub-module) with DLG4/PSD95 and DLGAP1/GKAP. Interacts (via the PDZ domain) with CADM1 (via C-terminus). Interacts with KCNN2/SK2 (via N-terminal domain). Interacts with SRC. In terms of processing, phosphorylated by SRC. In terms of tissue distribution, expressed in pyramidal neurons of CA1 region of the hippocampus.

It is found in the cell projection. The protein resides in the dendrite. It localises to the postsynaptic density. Its subcellular location is the cytoplasm. The protein localises to the cytoskeleton. It is found in the membrane. Functionally, postsynaptic MAGUK scaffold protein that links CADM1 cell adhesion molecules to core components of the postsynaptic density. In CA1 pyramidal neurons, required for synaptic KCNN2-containing channel function and long-term potentiation expression. Seems to negatively regulate SRC function in epithelial cells. This is MAGUK p55 subfamily member 2 from Mus musculus (Mouse).